The sequence spans 567 residues: Proline--tRNA ligase (567 aa).

This sequence belongs to the class-II aminoacyl-tRNA synthetase family. ProS type 1 subfamily. Homodimer.

The protein resides in the cytoplasm. It catalyses the reaction tRNA(Pro) + L-proline + ATP = L-prolyl-tRNA(Pro) + AMP + diphosphate. In terms of biological role, catalyzes the attachment of proline to tRNA(Pro) in a two-step reaction: proline is first activated by ATP to form Pro-AMP and then transferred to the acceptor end of tRNA(Pro). As ProRS can inadvertently accommodate and process non-cognate amino acids such as alanine and cysteine, to avoid such errors it has two additional distinct editing activities against alanine. One activity is designated as 'pretransfer' editing and involves the tRNA(Pro)-independent hydrolysis of activated Ala-AMP. The other activity is designated 'posttransfer' editing and involves deacylation of mischarged Ala-tRNA(Pro). The misacylated Cys-tRNA(Pro) is not edited by ProRS. This chain is Proline--tRNA ligase, found in Stenotrophomonas maltophilia (strain K279a).